The sequence spans 281 residues: Ethylene-inducing xylanase 1 (281 aa).

The first 19 residues, 1-19 (MVSYKAFLITLAAVTRVLT), serve as a signal peptide directing secretion. An N-linked (GlcNAc...) asparagine glycan is attached at Asn-23. The GH11 domain maps to 32-220 (SGTPSSTGTS…SSGSSDITVG (189 aa)). Catalysis depends on Glu-116, which acts as the Nucleophile. Glu-207 (proton donor) is an active-site residue. In terms of domain architecture, CBM1 spans 246–281 (TCGALYSQCGGTGFTGSQCCASGTCKYANSYYSQCL).

The protein belongs to the glycosyl hydrolase 11 (cellulase G) family.

The enzyme catalyses Endohydrolysis of (1-&gt;4)-beta-D-xylosidic linkages in xylans.. It functions in the pathway glycan degradation; xylan degradation. Its function is as follows. Endo-1,4-beta-xylanase involved in the hydrolysis of xylan, a major structural heterogeneous polysaccharide found in plant biomass representing the second most abundant polysaccharide in the biosphere, after cellulose. May act as an elicitor of plant defense responses in certain plants but does not exhibit any cell death when transiently expressed in N.benthamiana. This chain is Ethylene-inducing xylanase 1, found in Botryotinia fuckeliana (strain B05.10) (Noble rot fungus).